A 358-amino-acid chain; its full sequence is DnaJ homolog subfamily B member 11 (358 aa).

A signal peptide spans M1–A22. In terms of domain architecture, J spans D25–G90. At T188 the chain carries Phosphothreonine. A glycan (N-linked (GlcNAc...) asparagine) is linked at N261.

Part of a large chaperone multiprotein complex comprising DNAJB11, HSP90B1, HSPA5, HYOU, PDIA2, PDIA4, PDIA6, PPIB, SDF2L1, UGGT1 and very small amounts of ERP29, but not, or at very low levels, CALR nor CANX. Binds to denatured substrates in an ATP-independent manner. Interacts via the J domain with HSPA5 in an ATP-dependent manner. In terms of processing, contains high-mannose Endo H-sensitive carbohydrates. Cys-169, Cys-171, Cys-193 and Cys-196 form intramolecular disulfide bonds. The preferential partner for each Cys is not known.

The protein resides in the endoplasmic reticulum lumen. Its function is as follows. As a co-chaperone for HSPA5 it is required for proper folding, trafficking or degradation of proteins. Binds directly to both unfolded proteins that are substrates for ERAD and nascent unfolded peptide chains, but dissociates from the HSPA5-unfolded protein complex before folding is completed. May help recruiting HSPA5 and other chaperones to the substrate. Stimulates HSPA5 ATPase activity. It is necessary for maturation and correct trafficking of PKD1. The polypeptide is DnaJ homolog subfamily B member 11 (Dnajb11) (Mus musculus (Mouse)).